We begin with the raw amino-acid sequence, 57 residues long: uncharacterized protein (57 aa).

The helical transmembrane segment at 12-34 threads the bilayer; it reads VIAVLSLFVFAVAVFFVGMALLT.

It is found in the membrane. This is an uncharacterized protein from Pasteurella multocida (strain Pm70).